The chain runs to 1925 residues: MMETQPTSLPHVLPQDVYEFCDDRKSLGRLRVSEMPAESNGDGGGSKGDGAAVVAKEVPEQSNKKRKRCGVCVPCLRKEPCGACYNCVNRSTSHQICKMRKCEQLKKKRVVPLKGVEAVNKDDSKNQAKEQVPNVKNCSESILVDGPKTDQMEAGPVNHVQEGRLKKECDSTLPSKACEDLANQLLMEANSWLSNTAAPQDPCNKLNWDKPTIPNHTAATNNSNLEDAKNLVAFSAVAEAMSNYGMPASGTPSSVSMQLYEKFNYETNRDSSGHPEGNAPSCPEDLNTLKTALALAKHGVKPPNCNCDGPECPDYLEWLENKIKSSQKDSQESSFPGLGQVSKELVQKSYPKEEVLNLENKNLCPSGNLPFSQNALSLAKEKNISLQTAIAIEALTQLSSALPQTNNECPNSSSQPLINTCDQLTHFPTAKGNQLPIFPMACNELFQNQQSQLYTGKNALPVPQSPRQTSWEQNKKPSYQEGQYIPENLSQSSSVLPSDASTPQKTEFLQQWIQNADLLKSPSDPMTGLKQLLGNTDEYIKSVFKGPEALPNKIKHVKTKRTIKSIKKKSSDFLKMSPDQQLSQLLQENDFHHNAQAALQQHLHHKRNLFVDPNTMEACAQEQQNWWVPKSQKLPVSKTTENPVKERKKRRQRSPSQKQVEPKPKPPRKQVQIKKPRMKEGNAVFMPVSQISLDAFRGAEKEENQLKEMNLEKSLSNNIQPDLLESQSILVTGSQANIENRKTVNTQETCNENQASNGKASNFALCVNQANSLGAKDSCPTPSTDDASSSSGQGDSANQHTNVGDVPGQNDLSCLDDKFEDLLRQFEAEFGEDFSLPGSEAPSQNGVGPPKQQISGDPQFKMPFPSQLLPSENSTRPDAHSNPALSNNPISHNVSHNLDSLFSSKSPKKIKIESSGAITVVSTTCFYSEENQHLDGTPTKSDLPFNPTLSGFLESPLKYLTSPTKSLIDTPAKMAQAEFPTCDCVEQINEKDEGPYYTHLGSGPTVASIRELMEDRFGEKGEAIRIEKVIYTGKEGKSSRGCPIAKWVIRRQSEDEKLMCLVRQRAGHHCENAVIIILIMAWEGIPRALGDSLYSDITETITKYGNPTSRRCGLNDDRTCACQGKDPNTCGASFSFGCSWSMYFNGCKYARSKTPRKFRLIGDNPKEEEFLNDNFQDLATKVAPVYQMLAPQSYENQVNNEEVAIDCRLGLKEGRPFSGVTACMDFCAHAHKDQHNLYNGCTVVCTLTKEDNRTIGRIPEDEQLHVLPLYKVSSTDEFGSEDGQAEKIRKGGIQVLASFPREVRKLSEPAKSCRQRQLDAKKAAAEKKKLQKEKLVSPDKTKQEPADTKMCQQNPGVPQQQTKPCVKVEPSNHYNTYKYNGNGVVESYSVLGSCRPSDPYSMNSVYSYHSFYAQPNLPSVNGFHSKFALPPFGFYGFPNNPVVPNQFMNYGTSDARNSGWMNNSFEKKPDVQSLADGMNQSYGSELPEQSYRRSSEVPHHYSLQNPNSQKSFNISHRTTPSPMETTPYSNLPCYNKVIKKEPVCDPLVDPFQRANSVHSQSPGVNHSLQTSDLPFKANGALPSSGRSNAEGPCSMSLPNDKSGLEKRDYFGVHSNVPALKDKQWTPYGTDVPVGQRDSLDAQSPGKVWSSCKLSDSPAVLPSFASTQTKNWNGRQASLNQGLKEPMPFQEKLWNSVAASDRCSVTPSDRSSVTPCAELQDKNWASFPNPVGNSLKTESSQNHWDPYSLDDNMDDGQSKSVKEEEDEEEIWSDSEHNFLDKNIGGVAVAPGHGSILIECARRELHATTPLKKPNRCHPARISLVFYQHKNLNQPNHGLALWEAKMKLLAERARVKEEEAARLGIKQEVKSLGKKRKWGGAATTETPPVEKKDFIPTRQATTILTDSATTAFSYAYTKVTGPYSRFI.

Residues 62-103 (SNKKRKRCGVCVPCLRKEPCGACYNCVNRSTSHQICKMRKCE) form a CXXC-type zinc finger. Cys69, Cys72, Cys75, Cys81, Cys84, Cys87, Cys97, and Cys102 together coordinate Zn(2+). Disordered stretches follow at residues 457–476 (KNAL…QNKK), 630–685 (KSQK…NAVF), 774–812 (GAKD…QNDL), and 833–892 (DFSL…PISH). The span at 465 to 476 (SPRQTSWEQNKK) shows a compositional bias: polar residues. A compositionally biased stretch (basic residues) spans 665–677 (KPPRKQVQIKKPR). The span at 777–797 (DSCPTPSTDDASSSSGQGDSA) shows a compositional bias: low complexity. 2 stretches are compositionally biased toward polar residues: residues 841–856 (APSQ…QISG) and 883–892 (PALSNNPISH). Zn(2+)-binding residues include Cys982, Cys984, Cys1042, His1068, and Cys1070. Arg1110 provides a ligand contact to 2-oxoglutarate. Zn(2+) contacts are provided by Cys1120, Cys1122, Cys1138, Cys1147, and Cys1207. Cys1223 lines the 2-oxoglutarate pocket. His1229 is a binding site for Zn(2+). Fe cation contacts are provided by His1231 and Asp1233. His1265 serves as a coordination point for 2-oxoglutarate. Disordered stretches follow at residues 1307-1364 (SEPA…QTKP), 1474-1513 (LADG…KSFN), 1556-1600 (SVHS…LPND), and 1722-1769 (NWAS…EEEI). The segment covering 1316–1347 (RQLDAKKAAAEKKKLQKEKLVSPDKTKQEPAD) has biased composition (basic and acidic residues). Residues 1350 to 1363 (MCQQNPGVPQQQTK) show a composition bias toward polar residues. Basic and acidic residues predominate over residues 1490–1499 (SYRRSSEVPH). Polar residues-rich tracts occupy residues 1502–1513 (SLQNPNSQKSFN), 1556–1572 (SVHS…QTSD), and 1730–1742 (VGNS…SQNH). His1804 provides a ligand contact to Fe cation. 1819-1821 (RIS) contacts 2-oxoglutarate. The stretch at 1837-1870 (LALWEAKMKLLAERARVKEEEAARLGIKQEVKSL) forms a coiled coil.

This sequence belongs to the TET family. The cofactor is Fe(2+). Zn(2+) is required as a cofactor. Detected in embryo (at protein level). Detected in embryonic head, in developing brain, neural tube and eye.

It localises to the nucleus. The protein localises to the chromosome. It carries out the reaction a 5-methyl-2'-deoxycytidine in DNA + 2-oxoglutarate + O2 = a 5-hydroxymethyl-2'-deoxycytidine in DNA + succinate + CO2. It catalyses the reaction a 5-hydroxymethyl-2'-deoxycytidine in DNA + 2-oxoglutarate + O2 = a 5-formyl-2'-deoxycytidine in DNA + succinate + CO2 + H2O. The catalysed reaction is a 5-formyl-2'-deoxycytidine in DNA + 2-oxoglutarate + O2 = a 5-carboxyl-2'-deoxycytidine in DNA + succinate + CO2 + H(+). Functionally, dioxygenase that catalyzes the conversion of the modified genomic base 5-methylcytosine (5mC) into 5-hydroxymethylcytosine (5hmC) and plays a key role in epigenetic chromatin reprogramming during embryonic development. Conversion of 5mC into 5hmC probably constitutes the first step in cytosine demethylation. Selectively binds to the promoter region of target genes and contributes to regulate the expression of numerous developmental genes, including pax6, rax, sox9 and six3. May also contribute to the regulation of target genes in ways that do not require its enzyme activity. The sequence is that of Methylcytosine dioxygenase tet3-A from Xenopus laevis (African clawed frog).